A 40-amino-acid polypeptide reads, in one-letter code: Snaclec tokaracetin subunit beta (40 aa).

Cys2 and Cys13 are oxidised to a cystine. In terms of domain architecture, C-type lectin spans 9–40; it reads YDEHCYRVFQQKMNWEDAEKFCTQQHKGXHLX.

The protein belongs to the snaclec family. In terms of assembly, heterodimer of subunits alpha and beta; disulfide-linked. Expressed by the venom gland.

It is found in the secreted. Platelet antagonist that specifically and reversibly binds to a site on platelet glycoprotein Ibalpha (GP1BA) close to or identical with the site for vWF binding. It inhibits the binding of vWF to platelets and vWF-dependent shear-induced platelet aggregation. The sequence is that of Snaclec tokaracetin subunit beta from Protobothrops tokarensis (Tokara habu).